Reading from the N-terminus, the 86-residue chain is UPF0297 protein SH1302 (86 aa).

It belongs to the UPF0297 family.

The polypeptide is UPF0297 protein SH1302 (Staphylococcus haemolyticus (strain JCSC1435)).